A 1338-amino-acid polypeptide reads, in one-letter code: Protein dispatched homolog 3 (1338 aa).

At 1 to 67 (MDTEDDPLLQ…VGWIFTNPYC (67 aa)) the chain is on the cytoplasmic side. Residues 68–88 (AGFILFLGCAIPAVLAVVMFL) traverse the membrane as a helical segment. The Lumenal segment spans residues 89–406 (HYPALDIDIS…YEVRRTFNND (318 aa)). The tract at residues 164-196 (TRAKRSAPQGRTSSPEPRAHPHPGNETSRVTRG) is disordered. Residues 401–559 (RTFNNDMLLA…LFTMPAALGI (159 aa)) form the SSD domain. Residues 407-427 (MLLAFISSSCIAVLVYILTSC) form a helical membrane-spanning segment. S428 is a topological domain (cytoplasmic). Residues 429–449 (VFLSFFGIASIGLSCLVALFL) traverse the membrane as a helical segment. At 450-452 (YHV) the chain is on the lumenal side. A helical membrane pass occupies residues 453 to 473 (VFGIQYLGILNGVAAFVIVGI). The Cytoplasmic segment spans residues 474–517 (GVDDVFVFINTYRQATHLKDLRLRMIHTIQTAGKATFFTSLTTA). The chain crosses the membrane as a helical span at residues 518-538 (AAYAANIFSQIPAVHDFGLFM). S539 is a topological domain (lumenal). The helical transmembrane segment at 540-560 (LIVSCCWVAVLFTMPAALGIW) threads the bilayer. The Cytoplasmic segment spans residues 561-672 (TLYVSPLESS…WVLWSAVKSR (112 aa)). A helical transmembrane segment spans residues 673-693 (WVIVGLFLLVLLLSIFFASRL). Over 694 to 1128 (RPASRAPVLF…IFMEIIGVQS (435 aa)) the chain is Lumenal. The tract at residues 747-768 (SLEKKKRGSASPWGSKGSISDT) is disordered. A helical transmembrane segment spans residues 1129–1149 (ALYGLILSLVICVAAVAVFTT). A topological domain (cytoplasmic) is located at residue H1150. A helical transmembrane segment spans residues 1151–1171 (ILLLLPVLLSILGVVCLVVTI). The Lumenal portion of the chain corresponds to 1172-1237 (MYWSGWEMGA…TIEAIRHVGV (66 aa)). Residues 1238–1258 (AIVSSAVTTVIATVPLFFCII) traverse the membrane as a helical segment. Topologically, residues 1259–1266 (APFAKFGK) are cytoplasmic. The helical transmembrane segment at 1267–1287 (IVALNTGVSILYTLTVSTALL) threads the bilayer. Residues 1288 to 1302 (SIMGPGTFTRSRTSC) lie on the Lumenal side of the membrane. The helical transmembrane segment at 1303–1323 (LKAVAGVLLAGLLGLCICLAL) threads the bilayer. The Cytoplasmic portion of the chain corresponds to 1324 to 1338 (LKGGFKIPLPNGTAL).

The protein belongs to the patched family. In terms of tissue distribution, expressed in retina, hippocampus and cerebellum. Expressed in the ganglion and bipolar cells of the inner and outer nuclear layers of the retina and in Purkinje cells (at protein level). Expressed strongly in brain and retina, weakly in testis and bone marrow.

It is found in the endoplasmic reticulum membrane. It localises to the nucleus membrane. The protein localises to the cytoplasmic vesicle membrane. Its function is as follows. Plays a role in neuronal proliferation and differentiation. Plays a role in the accumulation of cellular cholesterol. Involved in intracellular lipid droplet formation. May contribute to cholesterol homeostasis in neuronal cells. This chain is Protein dispatched homolog 3, found in Gallus gallus (Chicken).